A 274-amino-acid chain; its full sequence is Large ribosomal subunit protein uL2 (274 aa).

Residues 223 to 265 (VVMNPVDHPHGGGEGRTSGGRHPVSPWGMPTKGFKTRKNKRTD) form a disordered region. The segment covering 256 to 265 (FKTRKNKRTD) has biased composition (basic residues).

It belongs to the universal ribosomal protein uL2 family. As to quaternary structure, part of the 50S ribosomal subunit. Forms a bridge to the 30S subunit in the 70S ribosome.

Its function is as follows. One of the primary rRNA binding proteins. Required for association of the 30S and 50S subunits to form the 70S ribosome, for tRNA binding and peptide bond formation. It has been suggested to have peptidyltransferase activity; this is somewhat controversial. Makes several contacts with the 16S rRNA in the 70S ribosome. The chain is Large ribosomal subunit protein uL2 from Vibrio parahaemolyticus serotype O3:K6 (strain RIMD 2210633).